The following is a 605-amino-acid chain: MALPPTEVHHIRNFCIIAHIDHGKSTLADRLLEITNTLDRSQMSSAQVLDDMDLERERGITIKSHAVQMKYRASDGLDYTLNLIDTPGHVDFSYEVSRSLAACEGALLVVDATQGVEAQTIANLYLALDAGLEIIPVINKIDLPSSDVEGVARQIIDLIGIKRDEILQVSAKAGIGVYELIEAIVKRVPAPSDNKHLPLRALIFDSVFDIYRGTVAYLRIVDGVLKKGDKVRFFANNKVFLADEIGTMSLKRQPSAVLEAGDVGYLICSIKDVKDAKVGDTVTLSDSPALEALAGYKEVKPMVFSGLYPVNSNEFEDLRESLEKLALNDASLIYTPETSVALGFGFRCGFLGLLHMEIIQERLEREYGVNIITTVPNVEYRVILTNGDVVIVDNPSKMPDTSRIGDVEEPYVSMQIITLSDYIGNIMKLGMERRGEYKNTDYLDSTRVNMHFEFPLAEIVFDFHDKLKSISKGYASMDYEYIDYRQSDLVKLDVLLNAEPVDALSIIVHRSKAYEWGRKLCTKLKGIIPKQMYEVAIQAAIGSRVISRETISAMRKNVLAKCYGGDISRKRKLLEKQKEGKKRMKQVGRVEIPQEAFLAILTIDE.

A tr-type G domain is found at 9 to 192 (HHIRNFCIIA…AIVKRVPAPS (184 aa)). Residues 21-26 (DHGKST) and 139-142 (NKID) each bind GTP.

It belongs to the TRAFAC class translation factor GTPase superfamily. Classic translation factor GTPase family. LepA subfamily.

The protein localises to the cell inner membrane. It carries out the reaction GTP + H2O = GDP + phosphate + H(+). Functionally, required for accurate and efficient protein synthesis under certain stress conditions. May act as a fidelity factor of the translation reaction, by catalyzing a one-codon backward translocation of tRNAs on improperly translocated ribosomes. Back-translocation proceeds from a post-translocation (POST) complex to a pre-translocation (PRE) complex, thus giving elongation factor G a second chance to translocate the tRNAs correctly. Binds to ribosomes in a GTP-dependent manner. The sequence is that of Elongation factor 4 from Chlorobium phaeobacteroides (strain DSM 266 / SMG 266 / 2430).